The sequence spans 150 residues: Ribosomal RNA large subunit methyltransferase H (150 aa).

Residues leucine 68, glycine 97, and 116–121 each bind S-adenosyl-L-methionine; that span reads LSAMTL.

It belongs to the RNA methyltransferase RlmH family. In terms of assembly, homodimer.

The protein localises to the cytoplasm. It carries out the reaction pseudouridine(1915) in 23S rRNA + S-adenosyl-L-methionine = N(3)-methylpseudouridine(1915) in 23S rRNA + S-adenosyl-L-homocysteine + H(+). Specifically methylates the pseudouridine at position 1915 (m3Psi1915) in 23S rRNA. This chain is Ribosomal RNA large subunit methyltransferase H, found in Prochlorococcus marinus (strain MIT 9303).